The sequence spans 116 residues: Nucleoid-associated protein A9601_00191 (116 aa).

This sequence belongs to the YbaB/EbfC family. Homodimer.

It localises to the cytoplasm. Its subcellular location is the nucleoid. Binds to DNA and alters its conformation. May be involved in regulation of gene expression, nucleoid organization and DNA protection. This is Nucleoid-associated protein A9601_00191 from Prochlorococcus marinus (strain AS9601).